We begin with the raw amino-acid sequence, 257 residues long: Aspartate/glutamate leucyltransferase (257 aa).

This sequence belongs to the R-transferase family. Bpt subfamily.

It localises to the cytoplasm. It carries out the reaction N-terminal L-glutamyl-[protein] + L-leucyl-tRNA(Leu) = N-terminal L-leucyl-L-glutamyl-[protein] + tRNA(Leu) + H(+). The catalysed reaction is N-terminal L-aspartyl-[protein] + L-leucyl-tRNA(Leu) = N-terminal L-leucyl-L-aspartyl-[protein] + tRNA(Leu) + H(+). Its function is as follows. Functions in the N-end rule pathway of protein degradation where it conjugates Leu from its aminoacyl-tRNA to the N-termini of proteins containing an N-terminal aspartate or glutamate. This is Aspartate/glutamate leucyltransferase from Phenylobacterium zucineum (strain HLK1).